A 284-amino-acid polypeptide reads, in one-letter code: Nucleotide-binding protein Shewmr4_0670 (284 aa).

ATP is bound at residue 8-15 (GRSGSGKS). 56 to 59 (DVRN) lines the GTP pocket.

Belongs to the RapZ-like family.

Displays ATPase and GTPase activities. The sequence is that of Nucleotide-binding protein Shewmr4_0670 from Shewanella sp. (strain MR-4).